The following is a 317-amino-acid chain: Melanocyte-stimulating hormone receptor (317 aa).

Residues 1–37 (MPMQEPQRRLLDPFNSTRTGTPHLKLSANQTGPWCLH) lie on the Extracellular side of the membrane. N-linked (GlcNAc...) asparagine glycans are attached at residues Asn15 and Asn29. A helical transmembrane segment spans residues 38-63 (VSIPDGLFLSLGLVSLVENVLVVISI). The Cytoplasmic portion of the chain corresponds to 64-72 (AKNRNLHSP). A helical membrane pass occupies residues 73-93 (MYYFICCLALSDLLVSVSIVL). The Extracellular segment spans residues 94–118 (ETTLILVLEAGALATRVTVVQQLDN). Residues 119–140 (VIDVLICGSMVSSLCFLGAIAV) traverse the membrane as a helical segment. At 141-163 (DRYISIFYALRYHSIVTLPRARW) the chain is on the cytoplasmic side. The helical transmembrane segment at 164–183 (AIVAIWVASISSSTLFVAYY) threads the bilayer. Over 184 to 191 (NHTAVLLC) the chain is Extracellular. A helical transmembrane segment spans residues 192 to 211 (LVTFFLATLALMAVLYVHML). The Cytoplasmic portion of the chain corresponds to 212–240 (ARAHQHAQAIAQLHKRQHLVHQGFRLKGA). The helical transmembrane segment at 241–266 (ATLTILLGIFFLCWGPFFLYLTLIVL) threads the bilayer. Over 267 to 279 (CPKHPTCSCFFKN) the chain is Extracellular. The helical transmembrane segment at 280 to 300 (LNLFLALIIFNSIVDPLIYAF) threads the bilayer. Over 301-317 (RSQELRMTLKEVLLCSW) the chain is Cytoplasmic. A lipid anchor (S-palmitoyl cysteine) is attached at Cys315.

This sequence belongs to the G-protein coupled receptor 1 family. Interacts with MGRN1, but does not undergo MGRN1-mediated ubiquitination; this interaction competes with GNAS-binding and thus inhibits agonist-induced cAMP production. Interacts with OPN3; the interaction results in a decrease in MC1R-mediated cAMP signaling and ultimately a decrease in melanin production in melanocytes.

It is found in the cell membrane. Receptor for MSH (alpha, beta and gamma) and ACTH. The activity of this receptor is mediated by G proteins which activate adenylate cyclase. Mediates melanogenesis, the production of eumelanin (black/brown) and phaeomelanin (red/yellow), via regulation of cAMP signaling in melanocytes. This chain is Melanocyte-stimulating hormone receptor (MC1R), found in Chaetodipus baileyi (Bailey's pocket mouse).